Consider the following 448-residue polypeptide: Cysteine--tRNA ligase (448 aa).

Residue Cys27 coordinates Zn(2+). The 'HIGH' region signature appears at 29–39 (PTVYNYIHVGN). Cys210, His235, and Glu239 together coordinate Zn(2+). The 'KMSKS' region signature appears at 267-271 (KMSKS). Lys270 lines the ATP pocket.

The protein belongs to the class-I aminoacyl-tRNA synthetase family. In terms of assembly, monomer. Requires Zn(2+) as cofactor.

It is found in the cytoplasm. The enzyme catalyses tRNA(Cys) + L-cysteine + ATP = L-cysteinyl-tRNA(Cys) + AMP + diphosphate. This is Cysteine--tRNA ligase from Lactococcus lactis subsp. lactis (strain IL1403) (Streptococcus lactis).